A 241-amino-acid polypeptide reads, in one-letter code: Uridylate kinase (241 aa).

An ATP-binding site is contributed by 14–17; that stretch reads KLSG. The segment at 22-27 is involved in allosteric activation by GTP; the sequence is GGLGMG. A UMP-binding site is contributed by Gly-56. 2 residues coordinate ATP: Gly-57 and Arg-61. UMP-binding positions include Asp-77 and 138-145; that span reads TGNPFFTT. Residues Thr-165, Tyr-171, and Asp-174 each contribute to the ATP site.

It belongs to the UMP kinase family. As to quaternary structure, homohexamer.

It is found in the cytoplasm. The enzyme catalyses UMP + ATP = UDP + ADP. It participates in pyrimidine metabolism; CTP biosynthesis via de novo pathway; UDP from UMP (UMPK route): step 1/1. Allosterically activated by GTP. Inhibited by UTP. Catalyzes the reversible phosphorylation of UMP to UDP. The sequence is that of Uridylate kinase from Psychrobacter sp. (strain PRwf-1).